The chain runs to 126 residues: Protein ApaG (126 aa).

In terms of domain architecture, ApaG spans 2-126 (TELETSIKID…FRLSIPGLLH (125 aa)).

In Shewanella woodyi (strain ATCC 51908 / MS32), this protein is Protein ApaG.